The primary structure comprises 92 residues: N(2)-fixation sustaining protein CowN (92 aa).

Belongs to the CowN family.

Its function is as follows. Is required to sustain N(2)-dependent growth in the presence of low levels of carbon monoxide (CO). Probably acts by protecting the N(2) fixation ability of the nitrogenase complex, which is inactivated in the presence of CO. In Rhodopseudomonas palustris (strain ATCC BAA-98 / CGA009), this protein is N(2)-fixation sustaining protein CowN.